The following is an 824-amino-acid chain: Spindle-defective protein 2 (824 aa).

Acidic residues-rich tracts occupy residues 16–27 (EIEDSPIDDNDN) and 35–44 (GDVELEEEEV). The interval 16–98 (EIEDSPIDDN…SRPASVMSDK (83 aa)) is disordered. Residues 59-70 (TNMTNPKVNDLT) are compositionally biased toward polar residues. The segment covering 81 to 98 (SAASSRSASRPASVMSDK) has biased composition (low complexity). The stretch at 111–131 (ENAIEEYTNQVFADENKADLL) forms a coiled coil. Residues 189 to 252 (RAKPGANDNE…GQYQGPNFDL (64 aa)) form a disordered region. The segment covering 207 to 225 (NVPTTSDKSAFITSPMNST) has biased composition (polar residues). Positions 304–324 (NNKNQDLFAALEEARKRRAAQ) form a coiled coil. Disordered stretches follow at residues 342–372 (KPTS…LTTS) and 433–455 (NNGN…VRTM). Over residues 349–366 (SGNVVSSTSNDNTTAASS) the composition is skewed to low complexity.

Interacts with sas-7 (via C-terminus); may be recruited to centrioles by sas-7.

Its subcellular location is the cytoplasm. It is found in the cytoskeleton. It localises to the microtubule organizing center. The protein resides in the centrosome. The protein localises to the centriole. Required both for centrosome duplication and maturation. Required for pericentriolar material (PCM) recruitment. The sequence is that of Spindle-defective protein 2 from Caenorhabditis elegans.